A 530-amino-acid chain; its full sequence is 6-phosphofructo-2-kinase/fructose-2,6-bisphosphatase 2 (530 aa).

Polar residues predominate over residues 1–15 (MSGASSSEQNNNSYE). The segment at 1–21 (MSGASSSEQNNNSYETKPPNL) is disordered. The residue at position 2 (serine 2) is an N-acetylserine. Residues 2–248 (SGASSSEQNN…VYYLMNIHVQ (247 aa)) form a 6-phosphofructo-2-kinase region. Serine 29 is subject to Phosphoserine; by PKA. 45–53 (GLPARGKTY) contacts ATP. Arginine 78 and arginine 102 together coordinate beta-D-fructose 6-phosphate. Aspartate 128 is a catalytic residue. Beta-D-fructose 6-phosphate-binding residues include threonine 130 and arginine 136. The active site involves cysteine 158. Residue 167–172 (NILEVK) coordinates ATP. Beta-D-fructose 6-phosphate-binding residues include lysine 172, arginine 193, and tyrosine 197. Residues 249–530 (PRTIYLCRHG…PPALASCPCH (282 aa)) are fructose-2,6-bisphosphatase. A beta-D-fructose 2,6-bisphosphate-binding site is contributed by arginine 256. The Tele-phosphohistidine intermediate role is filled by histidine 257. Glycine 269 provides a ligand contact to beta-D-fructose 2,6-bisphosphate. The active-site Proton donor/acceptor is glutamate 326. 6 residues coordinate beta-D-fructose 2,6-bisphosphate: tyrosine 337, arginine 351, lysine 355, tyrosine 366, glutamine 392, and arginine 396. 348-351 (FALR) lines the ATP pocket. ATP-binding positions include 392-396 (QAVMR) and tyrosine 428. The interval 446 to 512 (RDKPTNNFPK…GPTSRRPKSH (67 aa)) is disordered. Polar residues predominate over residues 450 to 476 (TNNFPKNQTPVRMRRNSFTPLSSSNTI). Residue serine 466 is modified to Phosphoserine; by AMPK and PKA. A Phosphothreonine modification is found at threonine 468. Position 475 is a phosphothreonine; by PKC (threonine 475). Phosphoserine occurs at positions 483 and 493.

This sequence in the C-terminal section; belongs to the phosphoglycerate mutase family. As to quaternary structure, homodimer. Forms a heterodimer with PFKFB3. Phosphorylation by AMPK stimulates activity.

It carries out the reaction beta-D-fructose 2,6-bisphosphate + H2O = beta-D-fructose 6-phosphate + phosphate. The enzyme catalyses beta-D-fructose 6-phosphate + ATP = beta-D-fructose 2,6-bisphosphate + ADP + H(+). With respect to regulation, phosphorylation results in the activation of the kinase activity. Functionally, synthesis and degradation of fructose 2,6-bisphosphate. The polypeptide is 6-phosphofructo-2-kinase/fructose-2,6-bisphosphatase 2 (PFKFB2) (Pongo abelii (Sumatran orangutan)).